The following is an 855-amino-acid chain: Suppressor of tumorigenicity 14 protein homolog (855 aa).

The tract at residues 1 to 21 is disordered; that stretch reads MKSERARRGAGGSGDLGAGFK. The Cytoplasmic portion of the chain corresponds to 1-55; sequence MKSERARRGAGGSGDLGAGFKYTSRPENMNGCEEGVEFLPANNSSKVEKGGPRRW. Position 13 is a phosphoserine (Ser-13). The helical; Signal-anchor for type II membrane protein transmembrane segment at 56 to 76 threads the bilayer; it reads VVLMAVLAAFLALSLLAGLLA. Residues 77–855 are Extracellular-facing; sequence WHFQDRNVRV…RDWIKAQIGV (779 aa). Positions 86–203 constitute an SEA domain; the sequence is VQKIFNGYLS…TSVVAFPSDP (118 aa). A glycan (N-linked (GlcNAc...) asparagine) is linked at Asn-109. Cys-214 and Cys-244 form a disulfide bridge. CUB domains lie at 214–334 and 340–447; these read CSFA…FFQL and CGGY…FLSF. N-linked (GlcNAc...) asparagine glycosylation is found at Asn-302 and Asn-365. 15 disulfides stabilise this stretch: Cys-340/Cys-366, Cys-397/Cys-410, Cys-453/Cys-464, Cys-459/Cys-477, Cys-471/Cys-486, Cys-488/Cys-501, Cys-496/Cys-514, Cys-508/Cys-523, Cys-525/Cys-537, Cys-532/Cys-550, Cys-544/Cys-559, Cys-567/Cys-579, Cys-574/Cys-593, Cys-587/Cys-602, and Cys-641/Cys-657. 4 consecutive LDL-receptor class A domains span residues 452-487, 487-524, 524-560, and 566-603; these read PCPG…LDCK, KCNA…EGCS, SCPP…AKCQ, and PCTE…KDCD. N-linked (GlcNAc...) asparagine glycosylation occurs at Asn-489. A Peptidase S1 domain is found at 615 to 854; the sequence is VVGGENSDQG…FRDWIKAQIG (240 aa). Active-site charge relay system residues include His-656 and Asp-711. A glycan (N-linked (GlcNAc...) asparagine) is linked at Asn-772. 2 cysteine pairs are disulfide-bonded: Cys-776–Cys-790 and Cys-801–Cys-830. The Charge relay system role is filled by Ser-805.

The protein belongs to the peptidase S1 family. Interacts with CDCP1. May interact with TMEFF1.

The protein resides in the membrane. The enzyme catalyses Cleaves various synthetic substrates with Arg or Lys at the P1 position and prefers small side-chain amino acids, such as Ala and Gly, at the P2 position.. Exhibits trypsin-like activity as defined by cleavage of synthetic substrates with Arg or Lys as the P1 site. Involved in the terminal differentiation of keratinocytes through prostasin (PRSS8) activation and filaggrin (FLG) processing. Proteolytically cleaves and therefore activates TMPRSS13. The polypeptide is Suppressor of tumorigenicity 14 protein homolog (ST14) (Bos taurus (Bovine)).